A 292-amino-acid polypeptide reads, in one-letter code: Ribosomal protein L11 methyltransferase (292 aa).

S-adenosyl-L-methionine contacts are provided by threonine 144, glycine 165, aspartate 187, and asparagine 229.

It belongs to the methyltransferase superfamily. PrmA family.

It is found in the cytoplasm. It catalyses the reaction L-lysyl-[protein] + 3 S-adenosyl-L-methionine = N(6),N(6),N(6)-trimethyl-L-lysyl-[protein] + 3 S-adenosyl-L-homocysteine + 3 H(+). Functionally, methylates ribosomal protein L11. The chain is Ribosomal protein L11 methyltransferase from Azotobacter vinelandii (strain DJ / ATCC BAA-1303).